The chain runs to 123 residues: UPF0299 membrane protein VV1471 (123 aa).

Helical transmembrane passes span 8 to 28 (LFGL…GSGI), 35 to 55 (SVPG…IGLV), 71 to 91 (MILL…MLIA), and 94 to 114 (LPII…LGWL).

Belongs to the UPF0299 family.

Its subcellular location is the cell inner membrane. In Vibrio vulnificus (strain YJ016), this protein is UPF0299 membrane protein VV1471.